The sequence spans 244 residues: Phosphoadenosine 5'-phosphosulfate reductase (244 aa).

Cys-239 serves as the catalytic Nucleophile; cysteine thiosulfonate intermediate.

The protein belongs to the PAPS reductase family. CysH subfamily.

The protein resides in the cytoplasm. The enzyme catalyses [thioredoxin]-disulfide + sulfite + adenosine 3',5'-bisphosphate + 2 H(+) = [thioredoxin]-dithiol + 3'-phosphoadenylyl sulfate. The protein operates within sulfur metabolism; hydrogen sulfide biosynthesis; sulfite from sulfate: step 3/3. In terms of biological role, catalyzes the formation of sulfite from phosphoadenosine 5'-phosphosulfate (PAPS) using thioredoxin as an electron donor. The protein is Phosphoadenosine 5'-phosphosulfate reductase of Salmonella heidelberg (strain SL476).